Reading from the N-terminus, the 1213-residue chain is tRNA wybutosine-synthesizing protein 4 (1213 aa).

Low complexity-rich tracts occupy residues 1-13 (METT…PATT) and 39-52 (ATTT…TTPT). A disordered region spans residues 1–76 (METTEEVVAP…DDQVMGTNNS (76 aa)). A compositionally biased stretch (basic and acidic residues) spans 53 to 67 (HNEHASAKDPRKAQD). S-adenosyl-L-methionine is bound by residues arginine 117, glycine 148, and aspartate 180. The segment covering 215–248 (STPAATTTAAATTTTTTELKTTAATASSTSTEAP) has biased composition (low complexity). The segment at 215-272 (STPAATTTAAATTTTTTELKTTAATASSTSTEAPQKPKKSPKPKDKSKAARAPAPTTA) is disordered. Residues 289 to 290 (DL) and glutamate 318 contribute to the S-adenosyl-L-methionine site. The disordered stretch occupies residues 879–900 (EPRSLPLRNQAPNGAEGNANGS). The JmjC domain maps to 1006–1166 (PTEKPAVLSD…YAAGKDVYGN (161 aa)).

This sequence belongs to the methyltransferase superfamily. LCMT family.

It catalyses the reaction 7-[(3S)-3-amino-3-carboxypropyl]wyosine(37) in tRNA(Phe) + S-adenosyl-L-methionine = 7-[(3S)-(3-amino-3-methoxycarbonyl)propyl]wyosine(37) in tRNA(Phe) + S-adenosyl-L-homocysteine. It carries out the reaction 7-[(3S)-(3-amino-3-methoxycarbonyl)propyl]wyosine(37) in tRNA(Phe) + S-adenosyl-L-methionine + CO2 = wybutosine(37) in tRNA(Phe) + S-adenosyl-L-homocysteine + 2 H(+). It participates in tRNA modification; wybutosine-tRNA(Phe) biosynthesis. Probable S-adenosyl-L-methionine-dependent methyltransferase that acts as a component of the wybutosine biosynthesis pathway. Wybutosine is a hyper modified guanosine with a tricyclic base found at the 3'-position adjacent to the anticodon of eukaryotic phenylalanine tRNA. May methylate the carboxyl group of leucine residues to form alpha-leucine ester residues. The polypeptide is tRNA wybutosine-synthesizing protein 4 (lcm-2) (Neurospora crassa (strain ATCC 24698 / 74-OR23-1A / CBS 708.71 / DSM 1257 / FGSC 987)).